We begin with the raw amino-acid sequence, 382 residues long: D-galactonate dehydratase (382 aa).

Asp183 contacts Mg(2+). His185 acts as the Proton donor in catalysis. Residues Glu209 and Glu235 each coordinate Mg(2+). His285 serves as the catalytic Proton acceptor.

Belongs to the mandelate racemase/muconate lactonizing enzyme family. GalD subfamily. Mg(2+) serves as cofactor.

It catalyses the reaction D-galactonate = 2-dehydro-3-deoxy-D-galactonate + H2O. The protein operates within carbohydrate acid metabolism; D-galactonate degradation; D-glyceraldehyde 3-phosphate and pyruvate from D-galactonate: step 1/3. In terms of biological role, catalyzes the dehydration of D-galactonate to 2-keto-3-deoxy-D-galactonate. The sequence is that of D-galactonate dehydratase from Ralstonia pickettii (strain 12J).